Consider the following 31-residue polypeptide: U1-theraphotoxin-Cv1a (31 aa).

Cystine bridges form between cysteine 2–cysteine 16, cysteine 9–cysteine 21, and cysteine 15–cysteine 28.

Expressed by the venom gland.

Its subcellular location is the secreted. Insecticidal toxin that induces reversible paralysis in crickets but not in cockroaches and mice. Molecular target unknown. The chain is U1-theraphotoxin-Cv1a from Coremiocnemis valida (Singapore tarantula).